The primary structure comprises 66 residues: Large ribosomal subunit protein bL35 (66 aa).

The protein belongs to the bacterial ribosomal protein bL35 family.

This is Large ribosomal subunit protein bL35 from Moorella thermoacetica (strain ATCC 39073 / JCM 9320).